The chain runs to 61 residues: Small ribosomal subunit protein uS14B (61 aa).

Residues C24, C27, C40, and C43 each contribute to the Zn(2+) site.

This sequence belongs to the universal ribosomal protein uS14 family. Zinc-binding uS14 subfamily. In terms of assembly, part of the 30S ribosomal subunit. Contacts proteins S3 and S10. It depends on Zn(2+) as a cofactor.

Functionally, binds 16S rRNA, required for the assembly of 30S particles and may also be responsible for determining the conformation of the 16S rRNA at the A site. The polypeptide is Small ribosomal subunit protein uS14B (Mycobacterium bovis (strain ATCC BAA-935 / AF2122/97)).